A 444-amino-acid chain; its full sequence is Phosphoglucosamine mutase (444 aa).

Ser102 (phosphoserine intermediate) is an active-site residue. Positions 102, 239, 241, and 243 each coordinate Mg(2+). A Phosphoserine modification is found at Ser102.

The protein belongs to the phosphohexose mutase family. Mg(2+) serves as cofactor. Activated by phosphorylation.

It catalyses the reaction alpha-D-glucosamine 1-phosphate = D-glucosamine 6-phosphate. Catalyzes the conversion of glucosamine-6-phosphate to glucosamine-1-phosphate. In Mycolicibacterium paratuberculosis (strain ATCC BAA-968 / K-10) (Mycobacterium paratuberculosis), this protein is Phosphoglucosamine mutase.